The sequence spans 172 residues: Nicotinamide-nucleotide adenylyltransferase (172 aa).

This sequence belongs to the archaeal NMN adenylyltransferase family.

It is found in the cytoplasm. It carries out the reaction beta-nicotinamide D-ribonucleotide + ATP + H(+) = diphosphate + NAD(+). It participates in cofactor biosynthesis; NAD(+) biosynthesis; NAD(+) from nicotinamide D-ribonucleotide: step 1/1. This chain is Nicotinamide-nucleotide adenylyltransferase, found in Saccharolobus solfataricus (strain ATCC 35092 / DSM 1617 / JCM 11322 / P2) (Sulfolobus solfataricus).